The sequence spans 209 residues: Ribosomal RNA large subunit methyltransferase E (209 aa).

The S-adenosyl-L-methionine site is built by Gly63, Trp65, Asp83, Asp99, and Asp124. Lys164 acts as the Proton acceptor in catalysis.

It belongs to the class I-like SAM-binding methyltransferase superfamily. RNA methyltransferase RlmE family.

The protein resides in the cytoplasm. The catalysed reaction is uridine(2552) in 23S rRNA + S-adenosyl-L-methionine = 2'-O-methyluridine(2552) in 23S rRNA + S-adenosyl-L-homocysteine + H(+). Specifically methylates the uridine in position 2552 of 23S rRNA at the 2'-O position of the ribose in the fully assembled 50S ribosomal subunit. The sequence is that of Ribosomal RNA large subunit methyltransferase E from Aeromonas salmonicida (strain A449).